The following is a 251-amino-acid chain: Triosephosphate isomerase (251 aa).

Position 9 to 11 (9 to 11 (NWK)) interacts with substrate. H95 (electrophile) is an active-site residue. The Proton acceptor role is filled by E167. Residues G173, S212, and 233–234 (GG) each bind substrate.

Belongs to the triosephosphate isomerase family. As to quaternary structure, homodimer.

The protein resides in the cytoplasm. The enzyme catalyses D-glyceraldehyde 3-phosphate = dihydroxyacetone phosphate. It functions in the pathway carbohydrate biosynthesis; gluconeogenesis. Its pathway is carbohydrate degradation; glycolysis; D-glyceraldehyde 3-phosphate from glycerone phosphate: step 1/1. Its function is as follows. Involved in the gluconeogenesis. Catalyzes stereospecifically the conversion of dihydroxyacetone phosphate (DHAP) to D-glyceraldehyde-3-phosphate (G3P). This is Triosephosphate isomerase from Vibrio sp. (strain ANT-300).